The chain runs to 466 residues: Cysteine--tRNA ligase (466 aa).

Residue cysteine 28 coordinates Zn(2+). The short motif at 30 to 40 (PTVYNYIHIGN) is the 'HIGH' region element. Positions 208, 233, and 237 each coordinate Zn(2+). A 'KMSKS' region motif is present at residues 265-269 (KMSKS). Lysine 268 is a binding site for ATP.

It belongs to the class-I aminoacyl-tRNA synthetase family. Monomer. Requires Zn(2+) as cofactor.

The protein localises to the cytoplasm. It carries out the reaction tRNA(Cys) + L-cysteine + ATP = L-cysteinyl-tRNA(Cys) + AMP + diphosphate. This Staphylococcus carnosus (strain TM300) protein is Cysteine--tRNA ligase.